Consider the following 360-residue polypeptide: Probable nuclear hormone receptor HR38 (360 aa).

Residues 1 to 21 (GSSSPGVAPADNTGPRAAPSS) are disordered. The nuclear receptor DNA-binding region spans 23 to 98 (SQLCAVCGDT…VGMVKEVVRT (76 aa)). 2 NR C4-type zinc fingers span residues 26 to 46 (CAVC…CEGC) and 62 to 86 (CLAE…FQKC). Residues 122-357 (PPISLITALV…PLIENMFRAS (236 aa)) enclose the NR LBD domain.

The protein belongs to the nuclear hormone receptor family. NR4 subfamily. As to quaternary structure, forms a heterodimer with USP.

The protein resides in the nucleus. The protein is Probable nuclear hormone receptor HR38 (HR38) of Bombyx mori (Silk moth).